A 98-amino-acid chain; its full sequence is DNA-directed RNA polymerase subunit omega (98 aa).

It belongs to the RNA polymerase subunit omega family. The RNAP catalytic core consists of 2 alpha, 1 beta, 1 beta' and 1 omega subunit. When a sigma factor is associated with the core the holoenzyme is formed, which can initiate transcription.

The catalysed reaction is RNA(n) + a ribonucleoside 5'-triphosphate = RNA(n+1) + diphosphate. In terms of biological role, promotes RNA polymerase assembly. Latches the N- and C-terminal regions of the beta' subunit thereby facilitating its interaction with the beta and alpha subunits. This chain is DNA-directed RNA polymerase subunit omega, found in Xylella fastidiosa (strain M12).